Reading from the N-terminus, the 205-residue chain is Dr1-associated corepressor (205 aa).

One can recognise a Histone-fold domain in the interval 14-77 (PARIKKIMQT…SHLKQCIELE (64 aa)). A disordered region spans residues 91 to 205 (PDMQGDGEDN…DAEDEEDYDS (115 aa)). Over residues 98-108 (EDNHVDGDKGP) the composition is skewed to basic and acidic residues. Over residues 138–155 (SEQEDESEDTDTDGEEET) the composition is skewed to acidic residues. The span at 172-192 (PPTPFIPFTSPLPLPPAPPGP) shows a compositional bias: pro residues. The segment covering 196–205 (DAEDEEDYDS) has biased composition (acidic residues).

This sequence belongs to the NC2 alpha/DRAP1 family. As to quaternary structure, heterodimer with DR1. Binds BTAF1. Post-translationally, phosphorylation reduces DNA binding, but has no effect on heterodimerization and TBP binding.

It localises to the nucleus. Its function is as follows. The association of the DR1/DRAP1 heterodimer with TBP results in a functional repression of both activated and basal transcription of class II genes. This interaction precludes the formation of a transcription-competent complex by inhibiting the association of TFIIA and/or TFIIB with TBP. Can bind to DNA on its own. This Mus musculus (Mouse) protein is Dr1-associated corepressor (Drap1).